A 363-amino-acid chain; its full sequence is MSMDVTFLGTGAAYPSPTRGASALVLRCEGECWLFDCGEGTQTQLMKSQLKAGRITKIFITHLHGDHFFGLPGLLCTISLQSGSMVTKQPIEIYGPVGLRDFIWRTMELSHTELVFPYVVHELVPTADQCPTEELQESVQVDKTDNPPKEGEGRTILLDSEENSYLLVDDEQFVVKAFRLFHRIPSFGFSVVEKKRPGKLNAQKLKDLGVPPGPAYGKLKNGISVVLENGVTISPQDVLKKPIVGRKICILGDCSGVVDDAGVKLCFEADLLIHEATLDDTQMDKAKEHGHSTPQMAATFAKLCQAKRLVLTHFSQRYKPVALAREGEADGIVELKKQAESVLDLQEVTLAEDFMVISIPIKK.

Residues H62, H64, D66, H67, H182, D253, and H313 each contribute to the Zn(2+) site. The active-site Proton acceptor is the D66.

Belongs to the RNase Z family. As to quaternary structure, homodimer. Zn(2+) serves as cofactor.

It localises to the cytoplasm. It is found in the cytosol. Its subcellular location is the nucleus. It carries out the reaction Endonucleolytic cleavage of RNA, removing extra 3' nucleotides from tRNA precursor, generating 3' termini of tRNAs. A 3'-hydroxy group is left at the tRNA terminus and a 5'-phosphoryl group is left at the trailer molecule.. Its function is as follows. Zinc phosphodiesterase, which displays some tRNA 3'-processing endonuclease activity. Specifically involved in tRNA repair: acts downstream of the ribosome-associated quality control (RQC) pathway by removing a 2',3'-cyclic phosphate from tRNAs following cleavage by ANKZF1. tRNAs are then processed by TRNT1. This Bos taurus (Bovine) protein is Zinc phosphodiesterase ELAC protein 1 (ELAC1).